Consider the following 163-residue polypeptide: Inorganic pyrophosphatase (163 aa).

E9 serves as a coordination point for Mg(2+). K17, R31, and Y43 together coordinate substrate. Mg(2+) is bound by residues D53, D58, D85, and D90. D90 functions as the Proton acceptor in the catalytic mechanism. Substrate is bound at residue Y127.

This sequence belongs to the PPase family. In terms of assembly, homohexamer. The cofactor is Mg(2+).

Its subcellular location is the cytoplasm. The enzyme catalyses diphosphate + H2O = 2 phosphate + H(+). Its function is as follows. Catalyzes the hydrolysis of inorganic pyrophosphate (PPi) forming two phosphate ions. The protein is Inorganic pyrophosphatase of Leifsonia xyli subsp. xyli (strain CTCB07).